The sequence spans 114 residues: Endoribonuclease MazF2 (114 aa).

Belongs to the PemK/MazF family. In terms of assembly, probably forms a complex with cognate antitoxin MazE2.

In terms of biological role, toxic component of a type II toxin-antitoxin (TA) system. Acts as an endoribonuclease on single-strand RNA, cleaving between the second and third bases in the sequences CUCCU and UUCCU. Neutralized by coexpression with cognate antitoxin MazE2. The polypeptide is Endoribonuclease MazF2 (mazF2) (Mycobacterium bovis (strain ATCC BAA-935 / AF2122/97)).